A 220-amino-acid polypeptide reads, in one-letter code: MGKNKVVLLFSGGIDSTVLLFWLLSRNYEIFPLFINYGQKSYEGELEAINKILKDLNTKNNLLTLNMPELQLVGSGALVGEYPKNISSHNEWYASEFFPNRNMILLSIAATYGYKLQISKIAIGVVGDSYQDTTRTFLEAMEMTLAQSIARYELIAPFAGHPRQKVIEEAYRLQVPLKSTFSCNAMGNRHCLLCTSCYEREKAIQLHEQCGKERAEKSDF.

10 to 20 (FSGGIDSTVLL) is an ATP binding site. 4 residues coordinate Zn(2+): Cys-183, Cys-191, Cys-194, and Cys-197.

Belongs to the QueC family. Homodimer. Requires Zn(2+) as cofactor.

It catalyses the reaction 7-carboxy-7-deazaguanine + NH4(+) + ATP = 7-cyano-7-deazaguanine + ADP + phosphate + H2O + H(+). Its pathway is purine metabolism; 7-cyano-7-deazaguanine biosynthesis. Catalyzes the ATP-dependent conversion of 7-carboxy-7-deazaguanine (CDG) to 7-cyano-7-deazaguanine (preQ(0)). This is 7-cyano-7-deazaguanine synthase 1 from Desulfitobacterium hafniense (strain Y51).